We begin with the raw amino-acid sequence, 363 residues long: Peptide chain release factor 1 (363 aa).

Residue Q237 is modified to N5-methylglutamine. Residues 286-296 (EKRRSAEESTR) show a composition bias toward basic and acidic residues. Residues 286 to 305 (EKRRSAEESTRRSLVASGDR) form a disordered region.

This sequence belongs to the prokaryotic/mitochondrial release factor family. Post-translationally, methylated by PrmC. Methylation increases the termination efficiency of RF1.

Its subcellular location is the cytoplasm. Its function is as follows. Peptide chain release factor 1 directs the termination of translation in response to the peptide chain termination codons UAG and UAA. The chain is Peptide chain release factor 1 from Shewanella baltica (strain OS155 / ATCC BAA-1091).